The following is a 363-amino-acid chain: MLGILRQRAIDGASTLRRTRFALVSARSYAAGAKEMTVRDALNSAIDEEMSADPKVFVMGEEVGQYQGAYKITKGLLEKYGPERVYDTPITEAGFTGIGVGAAYAGLKPVVEFMTFNFSMQAIDHIINSAAKSNYMSAGQINVPIVFRGPNGAAAGVGAQHSQCYAAWYASVPGLKVLAPYSAEDARGLLKAAIRDPDPVVFLENELLYGESFPISEEALDSSFCLPIGKAKIEREGKDVTIVTFSKMVGFALKAAEKLAEEGISAEVINLRSIRPLDRATINASVRKTSRLVTVEEGFPQHGVCAEICASVVEESFSYLDAPVERIAGADVPMPYAANLERLALPQIEDIVRASKRACYRSK.

A mitochondrion-targeting transit peptide spans 1–29 (MLGILRQRAIDGASTLRRTRFALVSARSY). Glutamate 92 is a binding site for thiamine diphosphate. Residues isoleucine 145, alanine 193, isoleucine 194, and aspartate 196 each contribute to the K(+) site. Residues lysine 247 and lysine 254 each participate in a glycyl lysine isopeptide (Lys-Gly) (interchain with G-Cter in ubiquitin) cross-link.

In terms of assembly, tetramer of 2 alpha and 2 beta subunits. Thiamine diphosphate serves as cofactor. Expressed in roots, immature rosettes, and mature rosettes.

The protein resides in the mitochondrion matrix. The catalysed reaction is N(6)-[(R)-lipoyl]-L-lysyl-[protein] + pyruvate + H(+) = N(6)-[(R)-S(8)-acetyldihydrolipoyl]-L-lysyl-[protein] + CO2. Its function is as follows. The pyruvate dehydrogenase complex catalyzes the overall conversion of pyruvate to acetyl-CoA and CO(2). It contains multiple copies of three enzymatic components: pyruvate dehydrogenase (E1), dihydrolipoamide acetyltransferase (E2) and lipoamide dehydrogenase (E3). The sequence is that of Pyruvate dehydrogenase E1 component subunit beta-1, mitochondrial (PDH2) from Arabidopsis thaliana (Mouse-ear cress).